An 893-amino-acid polypeptide reads, in one-letter code: DNA gyrase subunit A (893 aa).

The Topo IIA-type catalytic domain maps to 35 to 501 (LPDVRDGLKP…GLEDLEDEDL (467 aa)). Tyr123 functions as the O-(5'-phospho-DNA)-tyrosine intermediate in the catalytic mechanism. The GyrA-box signature appears at 528–534 (QNRGGRG). The disordered stretch occupies residues 810 to 893 (VNEEDDNEEN…ASDNEEDSDE (84 aa)). 2 stretches are compositionally biased toward acidic residues: residues 812–821 (EEDDNEENAD) and 852–862 (DAEMESVESPE). The segment covering 863–879 (NDDRIDIRQDFMDRVNE) has biased composition (basic and acidic residues). The segment covering 880–893 (DIESASDNEEDSDE) has biased composition (acidic residues).

This sequence belongs to the type II topoisomerase GyrA/ParC subunit family. Heterotetramer, composed of two GyrA and two GyrB chains. In the heterotetramer, GyrA contains the active site tyrosine that forms a transient covalent intermediate with DNA, while GyrB binds cofactors and catalyzes ATP hydrolysis.

The protein resides in the cytoplasm. The enzyme catalyses ATP-dependent breakage, passage and rejoining of double-stranded DNA.. Its function is as follows. A type II topoisomerase that negatively supercoils closed circular double-stranded (ds) DNA in an ATP-dependent manner to modulate DNA topology and maintain chromosomes in an underwound state. Negative supercoiling favors strand separation, and DNA replication, transcription, recombination and repair, all of which involve strand separation. Also able to catalyze the interconversion of other topological isomers of dsDNA rings, including catenanes and knotted rings. Type II topoisomerases break and join 2 DNA strands simultaneously in an ATP-dependent manner. This chain is DNA gyrase subunit A, found in Staphylococcus epidermidis (strain ATCC 35984 / DSM 28319 / BCRC 17069 / CCUG 31568 / BM 3577 / RP62A).